Consider the following 137-residue polypeptide: MLQPKRTKFRKQMKGRNRGLAQRGSKVSFGEFGLKAVARGRITARQIEAARRAMTRHVKRGGKIWIRVFPDKPITEKPLEVRQGKGKGNVEYWVAQIQPGKVLYEMEGVSEELAREAFALAAAKLPLNTTFVKRSVM.

The span at 1 to 17 shows a compositional bias: basic residues; it reads MLQPKRTKFRKQMKGRN. The segment at 1–22 is disordered; the sequence is MLQPKRTKFRKQMKGRNRGLAQ.

This sequence belongs to the universal ribosomal protein uL16 family. Part of the 50S ribosomal subunit.

In terms of biological role, binds 23S rRNA and is also seen to make contacts with the A and possibly P site tRNAs. In Teredinibacter turnerae (strain ATCC 39867 / T7901), this protein is Large ribosomal subunit protein uL16.